Consider the following 267-residue polypeptide: Actin maturation protease (267 aa).

The interval 1–32 (MSNISSVAPPPPPPPMIVTPSTPATTKERPVG) is disordered. Over residues 8 to 17 (APPPPPPPMI) the composition is skewed to pro residues. The interval 74 to 188 (SIVQVGPTCG…WALIVGYLVD (115 aa)) is peptidase C39-like. C82 is a catalytic residue.

The protein belongs to the ACTMAP family.

The enzyme catalyses N-terminal N(alpha)-acetyl-L-cysteinyl-L-aspartyl-[protein] + H2O = N-terminal L-aspartyl-[protein] + N-acetyl-L-cysteine. Its function is as follows. Actin maturation protease that specifically mediates the cleavage of immature acetylated N-terminal actin, thereby contributing to actin maturation. The chain is Actin maturation protease from Drosophila melanogaster (Fruit fly).